Consider the following 290-residue polypeptide: Protease HtpX (290 aa).

2 helical membrane-spanning segments follow: residues 6-26 (LFLV…NILF) and 36-56 (ISGL…ISLL). His143 serves as a coordination point for Zn(2+). Glu144 is a catalytic residue. His147 lines the Zn(2+) pocket. 2 helical membrane passes run 158–178 (LIQG…AGVI) and 200–220 (ITVF…VMWF). Zn(2+) is bound at residue Glu225.

It belongs to the peptidase M48B family. Requires Zn(2+) as cofactor.

It is found in the cell inner membrane. The chain is Protease HtpX from Aeromonas hydrophila subsp. hydrophila (strain ATCC 7966 / DSM 30187 / BCRC 13018 / CCUG 14551 / JCM 1027 / KCTC 2358 / NCIMB 9240 / NCTC 8049).